The following is a 455-amino-acid chain: uncharacterized protein (455 aa).

Over residues 1-20 (MGCCLSKKPSPSLPSSVKPS) the composition is skewed to low complexity. Disordered stretches follow at residues 1-234 (MGCC…IPAT) and 258-304 (RIAA…QNTK). Composition is skewed to basic and acidic residues over residues 35–46 (EEAKPKSEKLNQ), 61–75 (SHEERSKKTESDKDS), 129–143 (RSFDFDQNERIRGGD), 156–166 (RGVERVHGSPR), and 173–186 (PSRERERSGSRERG). A compositionally biased stretch (polar residues) spans 213 to 224 (SCGSSVNSSNNR). Over residues 260-271 (AASPRSKSPARA) the composition is skewed to low complexity.

This is an uncharacterized protein from Arabidopsis thaliana (Mouse-ear cress).